We begin with the raw amino-acid sequence, 95 residues long: Ribonuclease kappa-B (95 aa).

Transmembrane regions (helical) follow at residues 12-32 (GLIISVWGIIQLVLMGLFFYI) and 68-88 (CWIAACIYVLTLLLSAQQFYV).

The protein belongs to the RNase K family.

Its subcellular location is the membrane. Its activity is regulated as follows. Inhibited by Zn(2+) and Hg(2+), while it is unaffected by Ca(2+). Endoribonuclease which displays activity against poly(C) and poly(U) synthetic substrates, as well as rRNA. The chain is Ribonuclease kappa-B from Ceratitis capitata (Mediterranean fruit fly).